Here is a 154-residue protein sequence, read N- to C-terminus: Catabolic 3-dehydroquinase (154 aa).

Tyr-25 acts as the Proton acceptor in catalysis. Asn-79, His-85, and Asp-92 together coordinate substrate. The Proton donor role is filled by His-105. Substrate-binding positions include 106 to 107 (IS) and Arg-116.

This sequence belongs to the type-II 3-dehydroquinase family. Homododecamer. Adopts a ring-like structure, composed of an arrangement of two hexameric rings stacked on top of one another.

The enzyme catalyses 3-dehydroquinate = 3-dehydroshikimate + H2O. It functions in the pathway aromatic compound metabolism; 3,4-dihydroxybenzoate biosynthesis; 3,4-dihydroxybenzoate from 3-dehydroquinate: step 1/2. Its function is as follows. Is involved in the catabolism of quinate. Allows the utilization of quinate as carbon source via the beta-ketoadipate pathway. The sequence is that of Catabolic 3-dehydroquinase from Botryotinia fuckeliana (strain B05.10) (Noble rot fungus).